Reading from the N-terminus, the 122-residue chain is Large ribosomal subunit protein uL14 (122 aa).

It belongs to the universal ribosomal protein uL14 family. In terms of assembly, part of the 50S ribosomal subunit. Forms a cluster with proteins L3 and L19. In the 70S ribosome, L14 and L19 interact and together make contacts with the 16S rRNA in bridges B5 and B8.

Binds to 23S rRNA. Forms part of two intersubunit bridges in the 70S ribosome. The sequence is that of Large ribosomal subunit protein uL14 from Bacillus pumilus (strain SAFR-032).